The primary structure comprises 228 residues: Probable septum site-determining protein MinC (228 aa).

It belongs to the MinC family. In terms of assembly, interacts with MinD and FtsZ.

Cell division inhibitor that blocks the formation of polar Z ring septums. Rapidly oscillates between the poles of the cell to destabilize FtsZ filaments that have formed before they mature into polar Z rings. Prevents FtsZ polymerization. The polypeptide is Probable septum site-determining protein MinC (Bacillus anthracis (strain A0248)).